A 460-amino-acid polypeptide reads, in one-letter code: Light-independent protochlorophyllide reductase subunit N (460 aa).

Residues Cys-22, Cys-47, and Cys-107 each coordinate [4Fe-4S] cluster.

Belongs to the BchN/ChlN family. As to quaternary structure, protochlorophyllide reductase is composed of three subunits; ChlL, ChlN and ChlB. Forms a heterotetramer of two ChlB and two ChlN subunits. [4Fe-4S] cluster serves as cofactor.

It localises to the plastid. The protein resides in the cyanelle. The enzyme catalyses chlorophyllide a + oxidized 2[4Fe-4S]-[ferredoxin] + 2 ADP + 2 phosphate = protochlorophyllide a + reduced 2[4Fe-4S]-[ferredoxin] + 2 ATP + 2 H2O. It participates in porphyrin-containing compound metabolism; chlorophyll biosynthesis (light-independent). In terms of biological role, component of the dark-operative protochlorophyllide reductase (DPOR) that uses Mg-ATP and reduced ferredoxin to reduce ring D of protochlorophyllide (Pchlide) to form chlorophyllide a (Chlide). This reaction is light-independent. The NB-protein (ChlN-ChlB) is the catalytic component of the complex. The chain is Light-independent protochlorophyllide reductase subunit N from Cyanophora paradoxa.